The primary structure comprises 538 residues: T-complex protein 1 subunit epsilon (538 aa).

The protein belongs to the TCP-1 chaperonin family. Heterooligomeric complex of about 850 to 900 kDa that forms two stacked rings, 12 to 16 nm in diameter.

It localises to the cytoplasm. Molecular chaperone; assists the folding of proteins upon ATP hydrolysis. Known to play a role, in vitro, in the folding of actin and tubulin. This chain is T-complex protein 1 subunit epsilon (cct5), found in Dictyostelium discoideum (Social amoeba).